A 413-amino-acid chain; its full sequence is L-cysteine:1D-myo-inositol 2-amino-2-deoxy-alpha-D-glucopyranoside ligase (413 aa).

Cysteine 43 is a binding site for Zn(2+). Residues 43 to 46 (CGIT), threonine 58, and 81 to 83 (NIT) contribute to the L-cysteinyl-5'-AMP site. Residues 45–55 (ITPYDATHLGH) carry the 'HIGH' region motif. A 'ERGGDP' region motif is present at residues 187–192 (ERGGDP). Tryptophan 227 provides a ligand contact to L-cysteinyl-5'-AMP. Cysteine 231 contributes to the Zn(2+) binding site. 249-251 (GND) is a binding site for L-cysteinyl-5'-AMP. A Zn(2+)-binding site is contributed by histidine 256. Position 283 (valine 283) interacts with L-cysteinyl-5'-AMP. Residues 289 to 293 (KMSKS) carry the 'KMSKS' region motif.

It belongs to the class-I aminoacyl-tRNA synthetase family. MshC subfamily. As to quaternary structure, monomer. Requires Zn(2+) as cofactor.

It carries out the reaction 1D-myo-inositol 2-amino-2-deoxy-alpha-D-glucopyranoside + L-cysteine + ATP = 1D-myo-inositol 2-(L-cysteinylamino)-2-deoxy-alpha-D-glucopyranoside + AMP + diphosphate + H(+). In terms of biological role, catalyzes the ATP-dependent condensation of GlcN-Ins and L-cysteine to form L-Cys-GlcN-Ins. This Gordonia bronchialis (strain ATCC 25592 / DSM 43247 / BCRC 13721 / JCM 3198 / KCTC 3076 / NBRC 16047 / NCTC 10667) (Rhodococcus bronchialis) protein is L-cysteine:1D-myo-inositol 2-amino-2-deoxy-alpha-D-glucopyranoside ligase.